A 72-amino-acid polypeptide reads, in one-letter code: UPF0270 protein YheU (72 aa).

The protein belongs to the UPF0270 family.

The protein is UPF0270 protein YheU of Salmonella agona (strain SL483).